The sequence spans 696 residues: MAFGRNNRVRFRDWISEGTEYGYGRNKARPSLNTVLKNVRRGLKKPLSFGSHNKKRDSNSSTTTQKNIINPQGSFLQNWNKIFLFASVIALAIDPLFFYIPIVDGERHCLNLHRNLEIAASVLRTFIDAFYIIHIVFQFRTAYISPSSRVFGRGELVDDPKAIAIKYLSSYFIIDLLSILPLPQLVVLAVIPNVNKPVSLITKDYLITVIFTQYIPRILRIYPLYTEVTRTSGIVTETAWAGAAWNLSLYMLASHVFGALWYLISVEREDRCWREACEKIPEVCNFRFLYCDGNSSVRNDFLTTSCPFINPDDITNSTVFNFGIFTDALKSGIVESDDFWKKFFYCFWWGLRNLSALGQNLNTSKFVGEIIFAVSICISGLVLFALLIGNMQKYLESTTVREEEMRVRKRDAEQWMSHRMLPDDLRKRIRRYEQYKWQETRGVEEENLLRNLPKDLRRDIKRHFCLDLLKKVPLFEIMDEQLLDAVCDKLKPVLYTENSYAIREGDPVEEMLFVMRGKLMSATTNGGRTGFFNAVYLKPSDFCGEDLLTWALDPQSSSHFPISTRTVQALTEVEAFALAADDLKLVASQFRRLHSKQLQHTFRFYSVQWRTWGASFIQAAWRRHCRRKLARSLTEEEDRFRNAITKRERNAASSSSLVATLYASRFASNALRNLRTNNLPLLPPKPSEPDFSLRNP.

The Cytoplasmic segment spans residues 1-81 (MAFGRNNRVR…QGSFLQNWNK (81 aa)). Residues 45–65 (KPLSFGSHNKKRDSNSSTTTQ) form a disordered region. A helical membrane pass occupies residues 82-102 (IFLFASVIALAIDPLFFYIPI). Topologically, residues 103 to 116 (VDGERHCLNLHRNL) are extracellular. Residues 117–137 (EIAASVLRTFIDAFYIIHIVF) form a helical membrane-spanning segment. The Cytoplasmic portion of the chain corresponds to 138-170 (QFRTAYISPSSRVFGRGELVDDPKAIAIKYLSS). A helical transmembrane segment spans residues 171–191 (YFIIDLLSILPLPQLVVLAVI). At 192–204 (PNVNKPVSLITKD) the chain is on the extracellular side. The chain crosses the membrane as a helical span at residues 205–225 (YLITVIFTQYIPRILRIYPLY). The Cytoplasmic segment spans residues 226 to 243 (TEVTRTSGIVTETAWAGA). A helical membrane pass occupies residues 244–264 (AWNLSLYMLASHVFGALWYLI). Topologically, residues 265 to 367 (SVEREDRCWR…GQNLNTSKFV (103 aa)) are extracellular. Residues 368 to 388 (GEIIFAVSICISGLVLFALLI) form a helical membrane-spanning segment. Topologically, residues 389-696 (GNMQKYLEST…SEPDFSLRNP (308 aa)) are cytoplasmic. A nucleoside 3',5'-cyclic phosphate-binding positions include 474-598 (LFEI…SKQL) and Glu545. Residues 590–605 (FRRLHSKQLQHTFRFY) are calmodulin-binding. In terms of domain architecture, IQ spans 610–639 (RTWGASFIQAAWRRHCRRKLARSLTEEEDR). The interval 677–696 (NNLPLLPPKPSEPDFSLRNP) is disordered.

Belongs to the cyclic nucleotide-gated cation channel (TC 1.A.1.5) family. In terms of assembly, homotetramer or heterotetramer.

The protein localises to the cell membrane. Putative cyclic nucleotide-gated ion channel. The protein is Putative cyclic nucleotide-gated ion channel 13 (CNGC13) of Arabidopsis thaliana (Mouse-ear cress).